Consider the following 103-residue polypeptide: Large ribosomal subunit protein bL21 (103 aa).

Belongs to the bacterial ribosomal protein bL21 family. Part of the 50S ribosomal subunit. Contacts protein L20.

Functionally, this protein binds to 23S rRNA in the presence of protein L20. The chain is Large ribosomal subunit protein bL21 from Psychrobacter sp. (strain PRwf-1).